Reading from the N-terminus, the 193-residue chain is Flagellin B1 (193 aa).

Positions 1–12 (MFEFITDEDERG) are excised as a propeptide.

This sequence belongs to the archaeal flagellin family. In terms of processing, glycosylated.

Its subcellular location is the archaeal flagellum. Flagellin is the subunit protein which polymerizes to form the filaments of archaeal flagella. The chain is Flagellin B1 (flaB1) from Halobacterium salinarum (strain ATCC 700922 / JCM 11081 / NRC-1) (Halobacterium halobium).